Consider the following 489-residue polypeptide: Rhamnulokinase (489 aa).

13 to 17 (ASSGR) serves as a coordination point for ATP. Cys-68 and Cys-222 are oxidised to a cystine. Substrate is bound by residues Gly-83 and 236-238 (HDT). Residue Asp-237 is the Proton acceptor of the active site. An ATP-binding site is contributed by Thr-259. Asn-296 contacts substrate. ATP is bound at residue Gln-304. Residues Cys-353 and Cys-370 are joined by a disulfide bond. ATP is bound at residue Gly-402. A disulfide bond links Cys-413 and Cys-417.

It belongs to the rhamnulokinase family. In terms of assembly, monomer. Mg(2+) is required as a cofactor.

The catalysed reaction is L-rhamnulose + ATP = L-rhamnulose 1-phosphate + ADP + H(+). It participates in carbohydrate degradation; L-rhamnose degradation; glycerone phosphate from L-rhamnose: step 2/3. Functionally, involved in the catabolism of L-rhamnose (6-deoxy-L-mannose). Catalyzes the transfer of the gamma-phosphate group from ATP to the 1-hydroxyl group of L-rhamnulose to yield L-rhamnulose 1-phosphate. This Escherichia coli O9:H4 (strain HS) protein is Rhamnulokinase.